We begin with the raw amino-acid sequence, 563 residues long: Developmental regulatory protein wetA (563 aa).

Composition is skewed to polar residues over residues 54–69 (EQSPIISTSKQQTHPS) and 160–175 (HKQSFSPSLTRPSQFQ). 6 disordered regions span residues 54–81 (EQSPIISTSKQQTHPSPQWAKDFWSLPP), 112–176 (ASST…QFQK), 272–318 (SNNS…PDLQ), 334–356 (PQRQPSYQQVVASPPPQQPIQNT), 430–494 (PQLH…SPKG), and 516–538 (GVAPSGSSKTKARREQEARDRRR). The span at 272–305 (SNNSTVTSSPPSADDIFPSPHSSDPQSMSSWHSD) shows a compositional bias: low complexity. Over residues 430–441 (PQLHPQSRSPSL) the composition is skewed to polar residues.

This sequence belongs to the wetA family.

Its function is as follows. BrlA, abaA and wetA are pivotal regulators of conidiophore development and conidium maturation. They act individually and together to regulate their own expression and that of numerous other sporulation-specific genes. In Aspergillus oryzae (strain ATCC 42149 / RIB 40) (Yellow koji mold), this protein is Developmental regulatory protein wetA.